Here is a 101-residue protein sequence, read N- to C-terminus: Urease subunit beta (101 aa).

Belongs to the urease beta subunit family. In terms of assembly, heterotrimer of UreA (gamma), UreB (beta) and UreC (alpha) subunits. Three heterotrimers associate to form the active enzyme.

Its subcellular location is the cytoplasm. The enzyme catalyses urea + 2 H2O + H(+) = hydrogencarbonate + 2 NH4(+). Its pathway is nitrogen metabolism; urea degradation; CO(2) and NH(3) from urea (urease route): step 1/1. The chain is Urease subunit beta from Paraburkholderia phytofirmans (strain DSM 17436 / LMG 22146 / PsJN) (Burkholderia phytofirmans).